An 849-amino-acid polypeptide reads, in one-letter code: MEHLPMAFNTTNPLIQVEDDRTGLSVETLKRALADNLFYLQGKFPAIATKNDCYMALAYTIRDRLLQRWLNTFQTYLNCDNRVVCYLSAEYLLGPHLGNNLINLGLWEPVQQAVEESGLSLDELIDIEEEPGLGNGGLGRLAACFMDSLATLEIPAIGYGIRYEFGIFDQEIKDGWQVEITDKWLQLGNPWEIARPESAVLVKLGGHTEPYTDDQGNYRVRWIAGSLVKGIPYDTPILGYKVSTANNLRLWKSEAAESFDFQRFNVGDYYGAVQDKMSSENLTKVLYPNDEQIQGKELRLAQQYFFVSCSLQDMIRIHLSDNPTLENFHEHFAVQMNDTHPSIAVAELMRLLVDEHHYEWQRAWAITEATFGFTNHTLLPEALEKWSLPLFGEMLPRHLEIIYEINQRFLDQVRMKYPNDGDRLARLSIIDEAGEKSVRMAYLATVGSHAINGVAALHSQLVKETILKDFYELWPEKFSNKTNGVTPRRWMVLSNPRLSNLISSRIGDGWIKNLDELKQLEPFADLAGFRQDWCKVKREVKQDLARYIHTRTDLVVNPDSLFDVQVKRIHEYKRQHLNILHVIHLYLQIKNNPNLDVTPRTFIYGGKAAPGYFTAKLIIKLINSVADVVNNDPTIGDRLKVIFLPDYNVKFGQRVYPAADLSEQISTAGKEASGTGNMKFSMNGALTIGTLDGANIEIREEVGAENFFLFGLTTPEVEKTLAEGYQPWEYYNNNANLKAVVDLINSGFFSHGDTALFRPLMDSLLGQDPYLVFADFQAYVDCQNQVGEAYKDQENWARMAILNVARMGKFSSDRTIREYAEDIWAIKPVVIELEDLCPDGQCLLISPNK.

Lys-679 carries the N6-(pyridoxal phosphate)lysine modification.

This sequence belongs to the glycogen phosphorylase family. Pyridoxal 5'-phosphate serves as cofactor.

The enzyme catalyses [(1-&gt;4)-alpha-D-glucosyl](n) + phosphate = [(1-&gt;4)-alpha-D-glucosyl](n-1) + alpha-D-glucose 1-phosphate. Phosphorylase is an important allosteric enzyme in carbohydrate metabolism. Enzymes from different sources differ in their regulatory mechanisms and in their natural substrates. However, all known phosphorylases share catalytic and structural properties. This Synechocystis sp. (strain ATCC 27184 / PCC 6803 / Kazusa) protein is Glycogen phosphorylase (glgP).